We begin with the raw amino-acid sequence, 473 residues long: MGSRNIVQQQNRAEAAVPGAMKQKNIAGEKKNRRALGDIGNLVTVRGVDGKAKAIPQVSRPVTRSFCAQLLANAQTAAADNNKINAKGAIVVDGVLPDRRVAAARVPAQKKAAVVKPRPEEIIVISPDSVAEKKEKPIEKEKAAEKSAKKKAPTLTSTLTARSKAASGVKTKTKEQIVDIDAADVNNDLAVVEYVEDMYKFYKSVENESRPHDYMGSQPEINEKMRAILIDWLVQVHHKFELSPETLYLTINIVDRYLASETTIRRELQLVGIGAMLIASKYEEIWAPEVHELVCISDNTYSDKQILVMEKKILGALEWYLTVPTPYVFLVRFIKASMTDSDVENMVYFLAELGMMNYATLIYCPSMIAAASVYAARCTLNKAPFWNETLQLHTGFSEPQLMDCAKLLVAFPKMAGDQKLKSIYRKYSNLERGAVALLSPAKSVFVFLIELLMNAIEKIQCSLFFTSEIWCRF.

Over residues 1-12 (MGSRNIVQQQNR) the composition is skewed to polar residues. Disordered stretches follow at residues 1–23 (MGSR…AMKQ) and 134–155 (KEKP…APTL). The span at 134–147 (KEKPIEKEKAAEKS) shows a compositional bias: basic and acidic residues.

This sequence belongs to the cyclin family. Cyclin AB subfamily. Interacts with the CDC2 and CDK2 protein kinases to form a serine/threonine kinase holoenzyme complex. The cyclin subunit imparts substrate specificity to the complex.

Essential for the control of the cell cycle at the G2/M (mitosis) transition. G2/M cyclins accumulate steadily during G2 and are abruptly destroyed at mitosis. The protein is G2/mitotic-specific cyclin-1 of Antirrhinum majus (Garden snapdragon).